The chain runs to 495 residues: Histidine--tRNA ligase (495 aa).

The protein belongs to the class-II aminoacyl-tRNA synthetase family. In terms of assembly, homodimer.

The protein localises to the cytoplasm. It carries out the reaction tRNA(His) + L-histidine + ATP = L-histidyl-tRNA(His) + AMP + diphosphate + H(+). The chain is Histidine--tRNA ligase from Ruegeria pomeroyi (strain ATCC 700808 / DSM 15171 / DSS-3) (Silicibacter pomeroyi).